A 150-amino-acid chain; its full sequence is Ribonuclease K6 (150 aa).

Residues 1–23 form the signal peptide; sequence MVLCFPLLLLLLVLWGPVCPLHA. The active-site Proton acceptor is the histidine 38. 4 disulfides stabilise this stretch: cysteine 46–cysteine 104, cysteine 60–cysteine 114, cysteine 78–cysteine 129, and cysteine 85–cysteine 92. N-linked (GlcNAc...) asparagine glycosylation occurs at asparagine 55. Substrate-binding positions include 61–65 and lysine 86; that span reads KHQNT. N-linked (GlcNAc...) asparagine glycosylation occurs at asparagine 100. Arginine 105 is a binding site for substrate. Histidine 145 functions as the Proton donor in the catalytic mechanism.

Belongs to the pancreatic ribonuclease family. As to quaternary structure, interacts (via N-terminus) with bacterial lipopolysaccharide (LPS).

The protein localises to the secreted. It is found in the lysosome. Its subcellular location is the cytoplasmic granule. In terms of biological role, ribonuclease which shows a preference for the pyrimidines uridine and cytosine. Has potent antibacterial activity against a range of Gram-positive and Gram-negative bacteria, including P.aeruginosa, A.baumanii, M.luteus, S.aureus, E.faecalis, E.faecium, S.saprophyticus and E.coli. Causes loss of bacterial membrane integrity, and also promotes agglutination of Gram-negative bacteria. Probably contributes to urinary tract sterility. Bactericidal activity is independent of RNase activity. The polypeptide is Ribonuclease K6 (RNASE6) (Gorilla gorilla gorilla (Western lowland gorilla)).